A 320-amino-acid chain; its full sequence is rRNA 2'-O-methyltransferase fibrillarin 2 (320 aa).

Positions 1 to 79 are disordered; it reads MRPPLTGSGG…GRGGMKGGSK (79 aa). Gly residues-rich tracts occupy residues 7-44 and 57-76; these read GSGG…GGRG and PPRG…GMKG. S-adenosyl-L-methionine is bound by residues 167 to 168, 186 to 187, 211 to 212, and 231 to 234; these read TT, EF, DA, and DVAQ.

It belongs to the methyltransferase superfamily. Fibrillarin family. In terms of assembly, component of box C/D small nucleolar ribonucleoprotein (snoRNP) particles. Interacts with groundnut rosette virus long-distance movement protein; this interaction is required for virus long-distance movement protein transiting through host Cajal body and nucleolus, relocalization of fibrillarin to the cytoplasm, and in presence of viral RNA, leads to the formation of stable RNPs. Interacts (via GAR domain) with the hordeivirus TGB1 movement protein (via the first 82 amino acid residues). Interacts with PRMT11 and PRMT12. Interacts with MED19A. Post-translationally, methylated by PRMT11 and PRMT12. In terms of tissue distribution, expressed in roots and flowers. Expressed in leaves and stems. Expression levels decrease during aging.

The protein localises to the nucleus. Its subcellular location is the nucleolus. The catalysed reaction is a ribonucleotide in rRNA + S-adenosyl-L-methionine = a 2'-O-methylribonucleotide in rRNA + S-adenosyl-L-homocysteine + H(+). The enzyme catalyses L-glutaminyl-[histone H2A] + S-adenosyl-L-methionine = N(5)-methyl-L-glutaminyl-[histone H2A] + S-adenosyl-L-homocysteine + H(+). Its function is as follows. S-adenosyl-L-methionine-dependent methyltransferase that has the ability to methylate both RNAs and proteins. Involved in pre-rRNA processing. Utilizes the methyl donor S-adenosyl-L-methionine to catalyze the site-specific 2'-hydroxyl methylation of ribose moieties in pre-ribosomal RNA. Site specificity is provided by a guide RNA that base pairs with the substrate. Methylation occurs at a characteristic distance from the sequence involved in base pairing with the guide RNA. Also acts as a protein methyltransferase by mediating methylation of 'Gln-105' of histone H2A (H2AQ105me), a modification that impairs binding of the FACT complex and is specifically present at 35S ribosomal DNA locus. Acts as a negative regulator of expression of immune responsive genes, including pathogenesis-related gene 1 (PR1), and of resistance against bacterial pathogen. Binds to MED19A, a positive regulator of PR1 expression, to repress the activator activity of MED19A. In response to the bacterial pathogen-associated molecular pattern (PAMP) elf18, associates with the long non-coding RNA (lncRNA) ELENA1 (At4g16355), and releases its repression of MED19A. Possesses ribonuclease activity toward rRNA in vitro. Binds phosphoinositides, phospholipids and phosphatidic acid in vitro. The chain is rRNA 2'-O-methyltransferase fibrillarin 2 from Arabidopsis thaliana (Mouse-ear cress).